The chain runs to 440 residues: Transposon Ty1-ER2 Gag polyprotein (440 aa).

Polar residues-rich tracts occupy residues 1-10, 48-60, and 127-152; these read MESQQLSNYP, TKAN…TPAS, and QSQF…GNTF. Disordered regions lie at residues 1 to 93, 126 to 173, and 352 to 440; these read MESQ…MMTQ, PQSQ…RPPP, and GSRN…PETY. A compositionally biased stretch (low complexity) spans 153–165; sequence TDSSSADSDMTST. Residues 299 to 401 form an RNA-binding region; that stretch reads NNGIHINNKV…NSKSKTARAH (103 aa). A compositionally biased stretch (low complexity) spans 402-418; that stretch reads NVSTSNNSPSTDNDSIS. Position 416 is a phosphoserine (Ser-416). Positions 419-428 are enriched in polar residues; it reads KSTTEPIQLN. Residues 429 to 440 are compositionally biased toward basic and acidic residues; sequence NKHDLHLRPETY.

In terms of assembly, homotrimer.

The protein resides in the cytoplasm. Functionally, capsid protein (CA) is the structural component of the virus-like particle (VLP), forming the shell that encapsulates the retrotransposons dimeric RNA genome. The particles are assembled from trimer-clustered units and there are holes in the capsid shells that allow for the diffusion of macromolecules. CA also has nucleocapsid-like chaperone activity, promoting primer tRNA(i)-Met annealing to the multipartite primer-binding site (PBS), dimerization of Ty1 RNA and initiation of reverse transcription. In Saccharomyces cerevisiae (strain ATCC 204508 / S288c) (Baker's yeast), this protein is Transposon Ty1-ER2 Gag polyprotein (TY1A-ER2).